Here is a 104-residue protein sequence, read N- to C-terminus: MNTSVPTSVPTNQSVWGNVSTGLDALISGWARVEQIKAAKASTGQGRVEQAMTPELDNGAAVVVEAPKKAAQPSETLVFGVPQKTLLLGFGGLLVLGLVMRGNK.

The chain crosses the membrane as a helical span at residues leucine 77–valine 99.

Homodimer.

The protein localises to the virion membrane. The protein is Protein P3 (III) of Pseudoalteromonas phage PM2 (Bacteriophage PM2).